The primary structure comprises 267 residues: Dichloromethane dehalogenase (267 aa).

The region spanning 3–85 (TKLRYLHHPA…YLSEKYDCSS (83 aa)) is the GST N-terminal domain. Residues 91-224 (TLEERGHIQQ…AWQYENVRKY (134 aa)) form the GST C-terminal domain.

Belongs to the GST superfamily. Homohexamer.

Its subcellular location is the cytoplasm. The catalysed reaction is dichloromethane + H2O = formaldehyde + 2 chloride + 2 H(+). The protein operates within xenobiotic degradation; dichloromethane degradation. This is Dichloromethane dehalogenase (dcmA) from Methylophilus leisingeri (strain DSM 6813 / VKM B-2013 / DM11).